A 160-amino-acid polypeptide reads, in one-letter code: MMERFEKIEMKIPAKAEYVAIIRLTMAGVANRMGFAYDDIEDMKIAISEACTNIVQHAYKEDVGEITIVFGLYEDRLEIMAADNGVSFDFSSLKSKVGPYDINKPVEHLPENGLGLYLINTLMDDIQIMHDEGMTVLMTKYIQREQVENDGNPISTYNSY.

Belongs to the anti-sigma-factor family.

It catalyses the reaction L-seryl-[protein] + ATP = O-phospho-L-seryl-[protein] + ADP + H(+). It carries out the reaction L-threonyl-[protein] + ATP = O-phospho-L-threonyl-[protein] + ADP + H(+). In terms of biological role, negative regulator of sigma-B activity. Phosphorylates and inactivates its specific antagonist protein, RsbV. Upon phosphorylation of RsbV, RsbW is released and binds to sigma-B, thereby blocking its ability to form an RNA polymerase holoenzyme (E-sigma-B). The polypeptide is Serine-protein kinase RsbW (Bacillus cereus (strain G9842)).